The primary structure comprises 391 residues: E3 ubiquitin-protein ligase RMND5A (391 aa).

M1 carries the N-acetylmethionine modification. Residues 114–146 (SQRLLNEVMVEHFFRQGMLDVAEELCQESGLSV) form the LisH domain. The 58-residue stretch at 153 to 210 (PFVELNRILEALKVRVLRPALEWAVSNREMLIAQNSSLEFKLHRLYFISLLMGGTTNQ) folds into the CTLH domain. Residues 336–377 (CPILRQQTTDNNPPMKLVCGHIISRDALNKMFNGSKLKCPYC) form an RING-Gid-type zinc finger.

Identified in the CTLH complex that contains GID4, RANBP9 and/or RANBP10, MKLN1, MAEA, RMND5A (or alternatively its paralog RMND5B), GID8, ARMC8, WDR26 and YPEL5. Within this complex, MAEA, RMND5A (or alternatively its paralog RMND5B), GID8, WDR26, and RANBP9 and/or RANBP10 form the catalytic core, while GID4, MKLN1, ARMC8 and YPEL5 have ancillary roles.

The protein resides in the nucleus. It is found in the nucleoplasm. The protein localises to the cytoplasm. It carries out the reaction S-ubiquitinyl-[E2 ubiquitin-conjugating enzyme]-L-cysteine + [acceptor protein]-L-lysine = [E2 ubiquitin-conjugating enzyme]-L-cysteine + N(6)-ubiquitinyl-[acceptor protein]-L-lysine.. Core component of the CTLH E3 ubiquitin-protein ligase complex that selectively accepts ubiquitin from UBE2H and mediates ubiquitination and subsequent proteasomal degradation of the transcription factor HBP1. MAEA and RMND5A are both required for catalytic activity of the CTLH E3 ubiquitin-protein ligase complex. Catalytic activity of the complex is required for normal cell proliferation. The CTLH E3 ubiquitin-protein ligase complex is not required for the degradation of enzymes involved in gluconeogenesis, such as FBP1. This chain is E3 ubiquitin-protein ligase RMND5A (Rmnd5a), found in Mus musculus (Mouse).